The chain runs to 189 residues: HGPRTase-like protein (189 aa).

It belongs to the purine/pyrimidine phosphoribosyltransferase family. Archaeal HPRT subfamily.

Functionally, may catalyze a purine salvage reaction, the substrate is unknown. This is HGPRTase-like protein from Halomicrobium mukohataei (strain ATCC 700874 / DSM 12286 / JCM 9738 / NCIMB 13541) (Haloarcula mukohataei).